Here is a 238-residue protein sequence, read N- to C-terminus: Probable transcriptional regulatory protein SZO_02930 (238 aa).

The protein belongs to the TACO1 family. YeeN subfamily.

The protein localises to the cytoplasm. In Streptococcus equi subsp. zooepidemicus (strain H70), this protein is Probable transcriptional regulatory protein SZO_02930.